Consider the following 639-residue polypeptide: tRNA uridine 5-carboxymethylaminomethyl modification enzyme MnmG (639 aa).

13–18 is a binding site for FAD; sequence GGGHAG. 274–288 serves as a coordination point for NAD(+); that stretch reads GPRYCPSIEDKIHRF.

Belongs to the MnmG family. In terms of assembly, homodimer. Heterotetramer of two MnmE and two MnmG subunits. The cofactor is FAD.

The protein resides in the cytoplasm. NAD-binding protein involved in the addition of a carboxymethylaminomethyl (cmnm) group at the wobble position (U34) of certain tRNAs, forming tRNA-cmnm(5)s(2)U34. This chain is tRNA uridine 5-carboxymethylaminomethyl modification enzyme MnmG, found in Polynucleobacter asymbioticus (strain DSM 18221 / CIP 109841 / QLW-P1DMWA-1) (Polynucleobacter necessarius subsp. asymbioticus).